The sequence spans 375 residues: Naringenin 7-O-methyltransferase (375 aa).

Substrate is bound at residue 136–142 (LNLDKVF). The substrate binding stretch occupies residues 168-188 (LFQYLGQDGNEPSNTLFNQAM). Residues glycine 219, aspartate 242, methionine 263, and lysine 276 each contribute to the S-adenosyl-L-methionine site. Histidine 280 functions as the Proton acceptor in the catalytic mechanism.

The protein belongs to the class I-like SAM-binding methyltransferase superfamily. Cation-independent O-methyltransferase family. COMT subfamily.

The enzyme catalyses (2S)-naringenin + S-adenosyl-L-methionine = (2S)-sakuranetin + S-adenosyl-L-homocysteine + H(+). S-adenosyl-L-methionine-dependent methyltransferase involved in the biosynthesis of the sakuranetin, an inducible defense mechanism of O.sativa against pathogen attack. The sequence is that of Naringenin 7-O-methyltransferase from Oryza sativa subsp. japonica (Rice).